The primary structure comprises 263 residues: tRNA pseudouridine synthase A (263 aa).

The Nucleophile role is filled by Asp-51. Residue Tyr-109 coordinates substrate.

This sequence belongs to the tRNA pseudouridine synthase TruA family. Homodimer.

The enzyme catalyses uridine(38/39/40) in tRNA = pseudouridine(38/39/40) in tRNA. Its function is as follows. Formation of pseudouridine at positions 38, 39 and 40 in the anticodon stem and loop of transfer RNAs. The chain is tRNA pseudouridine synthase A from Pseudoalteromonas atlantica (strain T6c / ATCC BAA-1087).